The sequence spans 819 residues: MESTRVFVSGLPPTLTNDQLKKHFETRFHVTDAHVLPKRRIGFVGFKSSEAAQQAVSYFNKTYMRMSKISVDIAKPIDAEPAHRKDSRTAQPDDALGNNLKRKRDGDTIKDSKTQEYLSLLQQPSKTRTWANDDQLPDPDETDSHAQEQEQPFDVDDQEELTYAQRKKAKLGQDANESSHVPVVAGYQPTTDESDGQPSPEKHEEELEDPQKDQAPVSDSDWLRSKTSRLLGLLDEDEQETFASPAAATNPTPIINSNVEKPEAESPEKPAESDLTKAPTAAEVDTNIENIRISARLFVRNLSYETKESELEPVFSPFGKIEEIHVAFDTRFTTSKGFAYVQYADPDAAVEAYRNLDGKIFQGRLLHILPASQKKTYKLDEHELSKLPLKKQKQIKRKQEAASSTFSWNSLYMNADAVMSSVAERIGVSKADLLDPTSSDAAVKQAHAETHVIQETKAYFKANGVNLDAFKQRERGNLAILVKNFSYGTKTEDLRKLFEPFGQITRLLMPPSGTIAIVAFARPDEAQKAFKSLAYRKLGDSILFLEKAPKDLFEADVPPQNPLPETKAVSQGFSTADTFAADEGDEEVMATATLFIKNLNFSTTNQSLIEAFRPLDGFVSARIKTKPDPKNPGQTLSMGFGFADFKTKAQAQAALAVMNGYTLDRHTLVVRASHKGMDAAEERRKEDTAKKIAARRTKIIIKNLPFQATKKDVRSLFGAYGQLRSVRVPKKFDRSARGFGFADFVSAREAENAMDALKNTHLLGRRLVLEFANEEAIDAEEEIQRIEKKVGEQLDRVKLQKLTGAGRKKFTVGAQDDES.

The region spanning 4 to 76 (TRVFVSGLPP…SKISVDIAKP (73 aa)) is the RRM 1 domain. Disordered regions lie at residues 80-223 (EPAH…SDWL) and 242-281 (FASP…APTA). Positions 104 to 114 (RDGDTIKDSKT) are enriched in basic and acidic residues. The span at 115 to 132 (QEYLSLLQQPSKTRTWAN) shows a compositional bias: polar residues. A compositionally biased stretch (acidic residues) spans 151 to 160 (QPFDVDDQEE). A compositionally biased stretch (basic and acidic residues) spans 200-212 (PEKHEEELEDPQK). The span at 247–259 (AATNPTPIINSNV) shows a compositional bias: polar residues. Residues 260-275 (EKPEAESPEKPAESDL) are compositionally biased toward basic and acidic residues. 4 consecutive RRM domains span residues 295–373 (ARLF…PASQ), 478–550 (LAIL…KAPK), 592–675 (ATLF…ASHK), and 697–774 (TKII…FANE).

It belongs to the RRM MRD1 family.

The protein localises to the nucleus. Its function is as follows. Involved in pre-rRNA processing. The chain is Multiple RNA-binding domain-containing protein 1 (mrd1) from Emericella nidulans (strain FGSC A4 / ATCC 38163 / CBS 112.46 / NRRL 194 / M139) (Aspergillus nidulans).